The chain runs to 692 residues: Elongation factor G (692 aa).

The 275-residue stretch at 8–282 (ENTRNIGIMA…AVIDYLPSPL (275 aa)) folds into the tr-type G domain. GTP contacts are provided by residues 17-24 (AHIDAGKT), 81-85 (DTPGH), and 135-138 (NKMD).

This sequence belongs to the TRAFAC class translation factor GTPase superfamily. Classic translation factor GTPase family. EF-G/EF-2 subfamily.

It is found in the cytoplasm. Its function is as follows. Catalyzes the GTP-dependent ribosomal translocation step during translation elongation. During this step, the ribosome changes from the pre-translocational (PRE) to the post-translocational (POST) state as the newly formed A-site-bound peptidyl-tRNA and P-site-bound deacylated tRNA move to the P and E sites, respectively. Catalyzes the coordinated movement of the two tRNA molecules, the mRNA and conformational changes in the ribosome. The chain is Elongation factor G from Bacillus thuringiensis subsp. konkukian (strain 97-27).